Reading from the N-terminus, the 868-residue chain is Translation initiation factor IF-2 (868 aa).

The span at 199-209 (SKKEEVKPEKV) shows a compositional bias: basic and acidic residues. The segment at 199–269 (SKKEEVKPEK…GTEKSDKYRE (71 aa)) is disordered. Residues 249-260 (RGGRSKFKKKKG) are compositionally biased toward basic residues. Residues 368–537 (GRAPVVTIMG…LLQSEVLELK (170 aa)) form the tr-type G domain. Residues 377–384 (GHVDHGKT) form a G1 region. Position 377–384 (377–384 (GHVDHGKT)) interacts with GTP. The tract at residues 402-406 (GITQH) is G2. The G3 stretch occupies residues 423–426 (DTPG). Residues 423–427 (DTPGH) and 477–480 (NKMD) contribute to the GTP site. The interval 477–480 (NKMD) is G4. Positions 513–515 (SAK) are G5.

Belongs to the TRAFAC class translation factor GTPase superfamily. Classic translation factor GTPase family. IF-2 subfamily.

The protein localises to the cytoplasm. In terms of biological role, one of the essential components for the initiation of protein synthesis. Protects formylmethionyl-tRNA from spontaneous hydrolysis and promotes its binding to the 30S ribosomal subunits. Also involved in the hydrolysis of GTP during the formation of the 70S ribosomal complex. The chain is Translation initiation factor IF-2 from Legionella pneumophila (strain Paris).